Here is a 334-residue protein sequence, read N- to C-terminus: Dihydroorotate dehydrogenase (quinone) (334 aa).

FMN contacts are provided by residues 59–63 (AGLDK) and threonine 83. Residue lysine 63 participates in substrate binding. 108 to 112 (NRMGF) lines the substrate pocket. Residues asparagine 136 and asparagine 169 each coordinate FMN. A substrate-binding site is contributed by asparagine 169. Serine 172 functions as the Nucleophile in the catalytic mechanism. Asparagine 174 is a substrate binding site. The FMN site is built by lysine 214 and threonine 242. 243-244 (NT) contacts substrate. FMN-binding positions include glycine 265, glycine 294, and 315-316 (YS).

Belongs to the dihydroorotate dehydrogenase family. Type 2 subfamily. As to quaternary structure, monomer. It depends on FMN as a cofactor.

Its subcellular location is the cell membrane. It carries out the reaction (S)-dihydroorotate + a quinone = orotate + a quinol. It functions in the pathway pyrimidine metabolism; UMP biosynthesis via de novo pathway; orotate from (S)-dihydroorotate (quinone route): step 1/1. Catalyzes the conversion of dihydroorotate to orotate with quinone as electron acceptor. The polypeptide is Dihydroorotate dehydrogenase (quinone) (Acinetobacter baumannii (strain SDF)).